The primary structure comprises 144 residues: Cornifin-A (144 aa).

The segment at 1-41 is disordered; the sequence is MSSHQQKQPCTVPPQLHQQQVKQPCQPPPQEPCAPKTKDPC. A compositionally biased stretch (low complexity) spans 13–24; the sequence is PPQLHQQQVKQP. Tandem repeats lie at residues 27–34, 35–42, 43–49, 50–57, 58–65, 66–73, 74–81, 82–89, 90–97, 98–105, 106–113, 114–121, and 122–129. The tract at residues 27-129 is 13 X 8 AA approximate tandem repeats; the sequence is PPPQEPCAPK…CHPVVPEPCP (103 aa).

The protein belongs to the cornifin (SPRR) family. In terms of tissue distribution, expressed in fetal periderm, hair follicles and in the thickened epidermis of the lip and footpad. Also present in the epithelia of various tissues such as the penis, vagina, forestomach, tongue and esophagus.

It localises to the cytoplasm. In terms of biological role, cross-linked envelope protein of keratinocytes. It is a keratinocyte protein that first appears in the cell cytosol, but ultimately becomes cross-linked to membrane proteins by transglutaminase. All that results in the formation of an insoluble envelope beneath the plasma membrane. May participate widely in the construction of cell envelopes in cornifying epithelia characterized by either increased thickness or a requirement for extreme flexibility. The sequence is that of Cornifin-A (Sprr1a) from Mus musculus (Mouse).